The chain runs to 354 residues: Chorismate synthase (354 aa).

Arg48 is an NADP(+) binding site. FMN contacts are provided by residues 126–128, Ala278, 293–297, and Arg319; these read RAS and KPIPS.

This sequence belongs to the chorismate synthase family. In terms of assembly, homotetramer. FMNH2 serves as cofactor.

It carries out the reaction 5-O-(1-carboxyvinyl)-3-phosphoshikimate = chorismate + phosphate. It functions in the pathway metabolic intermediate biosynthesis; chorismate biosynthesis; chorismate from D-erythrose 4-phosphate and phosphoenolpyruvate: step 7/7. Its function is as follows. Catalyzes the anti-1,4-elimination of the C-3 phosphate and the C-6 proR hydrogen from 5-enolpyruvylshikimate-3-phosphate (EPSP) to yield chorismate, which is the branch point compound that serves as the starting substrate for the three terminal pathways of aromatic amino acid biosynthesis. This reaction introduces a second double bond into the aromatic ring system. The chain is Chorismate synthase from Desulfosudis oleivorans (strain DSM 6200 / JCM 39069 / Hxd3) (Desulfococcus oleovorans).